A 223-amino-acid polypeptide reads, in one-letter code: Na(+)-translocating NADH-quinone reductase subunit D (223 aa).

5 consecutive transmembrane segments (helical) span residues 42 to 62, 66 to 86, 103 to 123, 131 to 151, and 178 to 198; these read TVMA…ISMI, IPSS…VIVV, VFVG…AFAM, FFDG…LGFI, and NGLL…IWAL.

The protein belongs to the NqrDE/RnfAE family. Composed of six subunits; NqrA, NqrB, NqrC, NqrD, NqrE and NqrF.

It localises to the cell inner membrane. It catalyses the reaction a ubiquinone + n Na(+)(in) + NADH + H(+) = a ubiquinol + n Na(+)(out) + NAD(+). Its function is as follows. NQR complex catalyzes the reduction of ubiquinone-1 to ubiquinol by two successive reactions, coupled with the transport of Na(+) ions from the cytoplasm to the periplasm. NqrA to NqrE are probably involved in the second step, the conversion of ubisemiquinone to ubiquinol. This Pseudomonas paraeruginosa (strain DSM 24068 / PA7) (Pseudomonas aeruginosa (strain PA7)) protein is Na(+)-translocating NADH-quinone reductase subunit D.